A 266-amino-acid polypeptide reads, in one-letter code: rRNA adenine N-6-methyltransferase (266 aa).

S-adenosyl-L-methionine is bound by residues His14, Thr16, Gly41, Glu62, Asp87, and Asn103.

The protein belongs to the class I-like SAM-binding methyltransferase superfamily. rRNA adenine N(6)-methyltransferase family.

Involved in erythromycin resistance. The sequence is that of rRNA adenine N-6-methyltransferase (ermF) from Bacteroides fragilis.